Consider the following 173-residue polypeptide: RNA pyrophosphohydrolase (173 aa).

The Nudix hydrolase domain occupies 6–149; it reads GFRANVGIII…KRDVYRKVMK (144 aa). The Nudix box signature appears at 38 to 59; that stretch reads GGVDEGESAEEAMYRELYEEVG.

The protein belongs to the Nudix hydrolase family. RppH subfamily. It depends on a divalent metal cation as a cofactor.

Accelerates the degradation of transcripts by removing pyrophosphate from the 5'-end of triphosphorylated RNA, leading to a more labile monophosphorylated state that can stimulate subsequent ribonuclease cleavage. The sequence is that of RNA pyrophosphohydrolase from Shewanella piezotolerans (strain WP3 / JCM 13877).